Reading from the N-terminus, the 720-residue chain is MLRVLHRAASALVMATVIGLAPAVAFALAEPTSTPQAPIAAYKPRSNEILWDGYGVPHIYGVDAPSAFYGYGWAQARSHGDNILRLYGEARGKGAEYWGPDYEQTTVWLLTNGVPERAQQWYAQQSPDFRANLDAFAAGINAYAQQNPDDISPEVRQVLPVSGADVVAHAHRLMNFLYVASPGRTLGEGDPPDLADQGSNSWAVAPGKTANGNALLLQNPHLSWTTDYFTYYEAHLVTPDFEIYGATQIGLPVIRFAFNQRMGITNTVNGMVGATNYRLTLQDGGYLYDGQVRPFERPQASYRLRQADGTTVDKPLEIRSSVHGPVFERADGTAVAVRVAGLDRPGMLEQYFDMITADSFDDYEAALARMQVPTFNIVYADREGTINYSFNGVAPKRAEGDIAFWQGLVPGDSSRYLWTETHPLDDLPRVTNPPGGFVQNSNDPPWTPTWPVTYTPKDFPSYLAPQTPHSLRAQQSVRLMSENDDLTLERFMALQLSHRAVMADRTLPDLIPAALIDPDPEVQAAARLLAAWDREFTSDSRAALLFEEWARLFAGQNFAGQAGFATPWSLDKPVSTPYGVRDPKAAVDQLRTAIANTKRKYGAIDRPFGDASRMILNDVNVPGAAGYGNLGSFRVFTWSDPDENGVRTPVHGETWVAMIEFSTPVRAYGLMSYGNSRQPGTTHYSDQIERVSRADFRELLLRREQVEAAVQERTPFNFKP.

An N-terminal signal peptide occupies residues 1–29; that stretch reads MLRVLHRAASALVMATVIGLAPAVAFALA. The propeptide at 190-198 is spacer peptide; it reads DPPDLADQG. Ser-199 acts as the Nucleophile in catalysis. Active-site residues include His-221 and Glu-653.

This sequence belongs to the peptidase S45 family. As to quaternary structure, heterotetramer of two alpha and two beta subunits processed from the same precursor.

The protein resides in the periplasm. It carries out the reaction (7R)-7-(4-carboxybutanamido)cephalosporanate + H2O = (7R)-7-aminocephalosporanate + glutarate. Functionally, catalyzes the deacylation of 7 beta-(4-carboxybutanamido)cephalosporanic acid (glutaryl-7-aminocephalosporanic acid or GL-7-ACA) to 7-aminocephalosporanic acid (7-ACA). The protein is Glutaryl-7-aminocephalosporanic-acid acylase of Pseudomonas sp. (strain SY-77).